A 338-amino-acid chain; its full sequence is SPbeta prophage-derived uncharacterized protein YonB (338 aa).

The polypeptide is SPbeta prophage-derived uncharacterized protein YonB (yonB) (Bacillus subtilis (strain 168)).